The sequence spans 384 residues: Cytochrome b (384 aa).

4 consecutive transmembrane segments (helical) span residues 32–52 (FGSL…FLSM), 75–96 (FLLR…YFHI), 111–131 (WRVG…GYVL), and 176–196 (FFSL…VHLI). Heme b contacts are provided by histidine 81 and histidine 95. Heme b contacts are provided by histidine 180 and histidine 194. Residue histidine 199 participates in a ubiquinone binding. 4 consecutive transmembrane segments (helical) span residues 224 to 244 (SKDW…VYLM), 286 to 306 (FGGV…PLLH), 318 to 338 (FGRM…WIGS), and 345 to 366 (FIII…LIPL).

Belongs to the cytochrome b family. The main subunits of complex b-c1 are: cytochrome b, cytochrome c1 and the Rieske protein. Requires heme b as cofactor.

Its subcellular location is the mitochondrion inner membrane. Its function is as follows. Component of the ubiquinol-cytochrome c reductase complex (complex III or cytochrome b-c1 complex) that is part of the mitochondrial respiratory chain. The b-c1 complex mediates electron transfer from ubiquinol to cytochrome c. Contributes to the generation of a proton gradient across the mitochondrial membrane that is then used for ATP synthesis. In Acropora tenuis (Purple tipped acropora), this protein is Cytochrome b (MT-CYB).